We begin with the raw amino-acid sequence, 1133 residues long: Eukaryotic translation initiation factor 3 subunit A (1133 aa).

The PCI domain occupies 317–498 (IQRMTSHVLI…HCVHFGTDLS (182 aa)). Coiled-coil stretches lie at residues 573 to 700 (KKIE…YFER) and 784 to 886 (EEER…EADS). Basic and acidic residues predominate over residues 810–893 (KEEERRRAEE…ADSWRDRRGG (84 aa)). The tract at residues 810–1133 (KEEERRRAEE…DGWTDVKHHR (324 aa)) is disordered. A compositionally biased stretch (low complexity) spans 895–909 (APAAAAQPNPAAQEA). Basic and acidic residues-rich tracts occupy residues 920-944 (GARE…RDVR), 954-1081 (VERR…DSAW), and 1097-1117 (TRQD…KEAR).

This sequence belongs to the eIF-3 subunit A family. Component of the eukaryotic translation initiation factor 3 (eIF-3) complex.

It is found in the cytoplasm. Functionally, RNA-binding component of the eukaryotic translation initiation factor 3 (eIF-3) complex, which is involved in protein synthesis of a specialized repertoire of mRNAs and, together with other initiation factors, stimulates binding of mRNA and methionyl-tRNAi to the 40S ribosome. The eIF-3 complex specifically targets and initiates translation of a subset of mRNAs involved in cell proliferation. The sequence is that of Eukaryotic translation initiation factor 3 subunit A from Aedes aegypti (Yellowfever mosquito).